Consider the following 154-residue polypeptide: MGLSDGEWQLVLNIWGKVETDLAGHGQEVLIRLFKNHPETLDKFDKFKHLKTEDEMKGSEDLKKHGNTVLTALGGILKKKGHHEAELKPLAQSHATKHKIPVKYLEFISDAIIQVLQSKHSGDFHADTEAAMKKALELFRNDIAAKYKELGFQG.

In terms of domain architecture, Globin spans 2-148; sequence GLSDGEWQLV…FRNDIAAKYK (147 aa). Ser-4 is modified (phosphoserine). Residue His-65 coordinates nitrite. His-65 contacts O2. Thr-68 is subject to Phosphothreonine. His-94 contacts heme b.

It belongs to the globin family. As to quaternary structure, monomeric.

The protein localises to the cytoplasm. The protein resides in the sarcoplasm. It carries out the reaction Fe(III)-heme b-[protein] + nitric oxide + H2O = Fe(II)-heme b-[protein] + nitrite + 2 H(+). It catalyses the reaction H2O2 + AH2 = A + 2 H2O. Functionally, monomeric heme protein which primary function is to store oxygen and facilitate its diffusion within muscle tissues. Reversibly binds oxygen through a pentacoordinated heme iron and enables its timely and efficient release as needed during periods of heightened demand. Depending on the oxidative conditions of tissues and cells, and in addition to its ability to bind oxygen, it also has a nitrite reductase activity whereby it regulates the production of bioactive nitric oxide. Under stress conditions, like hypoxia and anoxia, it also protects cells against reactive oxygen species thanks to its pseudoperoxidase activity. This chain is Myoglobin (MB), found in Vulpes chama (Cape fox).